The following is a 1071-amino-acid chain: MPAIMTMLADHAARQLLDFSQKLDINLLDNVVNCLYHGEGAQQRMAQEVLTHLKEHPDAWTRVDTILEFSQNMNTKYYGLQILENVIKTRWKILPRNQCEGIKKYVVGLIIKTSSDPTCVEKEKVYIGKLNMILVQILKQEWPKHWPTFISDIVGASRTSESLCQNNMVILKLLSEEVFDFSSGQITQVKAKHLKDSMCNEFSQIFQLCQFVMENSQNAPLVHATLETLLRFLNWIPLGYIFETKLISTLIYKFLNVPMFRNVSLKCLTEIAGVSVSQYEEQFETLFTLTMMQLKQMLPLNTNIRLAYSNGKDDEQNFIQNLSLFLCTFLKEHGQLLEKRLNLREALMEALHYMLLVSEVEETEIFKICLEYWNHLAAELYRESPFSTSASPLLSGSQHFDIPPRRQLYLTVLSKVRLLMVSRMAKPEEVLVVENDQGEVVREFMKDTDSINLYKNMRETLVYLTHLDYVDTEIIMTKKLQNQVNGTEWSWKNLNTLCWAIGSISGAMHEEDEKRFLVTVIKDLLGLCEQKRGKDNKAIIASNIMYIVGQYPRFLRAHWKFLKTVVNKLFEFMHETHDGVQDMACDTFIKIAQKCRRHFVQVQVGEVMPFIDEILNNINTIICDLQPQQVHTFYEAVGYMIGAQTDQTVQEHLIEKYMLLPNQVWDSIIQQATKNVDILKDPETVKQLGSILKTNVRACKAVGHPFVIQLGRIYLDMLNVYKCLSENISAAIQANGEMVTKQPLIRSMRTVKRETLKLISGWVSRSNDPQMVAENFVPPLLDAVLIDYQRNVPAAREPEVLSTMAIIVNKLGGHITAEIPQIFDAVFECTLNMINKDFEEYPEHRTNFFLLLQAVNSHCFPAFLAIPPAQFKLVLDSIIWAFKHTMRNVADTGLQILFTLLQNVAQEEAAAQSFYQTYFCDILQHIFSVVTDTSHTAGLTMHASILAYMFNLVEEGKISTPLNPGNPVNNQMFIQDYVANLLKSAFPHLQDAQVKLFVTGLFSLNQDIPAFKEHLRDFLVQIKEFAGEDTSDLFLEERETALRQAQEEKHKLQMSVPGILNPHEIPEEMCD.

Residues 46-112 enclose the Importin N-terminal domain; the sequence is AQEVLTHLKE…KKYVVGLIIK (67 aa). HEAT repeat units lie at residues 217–240, 241–277, 354–472, 515–553, 560–597, and 602–639; these read QNAP…PLGY, IFET…VSVS, MLLV…YVDT, RFLV…QYPR, KFLK…KCRR, and VQVG…AVGY. The segment at 327-450 is necessary for interaction with Ran and nuclear export complex formation; it reads CTFLKEHGQL…VREFMKDTDS (124 aa). Serine 391 carries the phosphoserine modification. The tract at residues 411–481 is necessary for interaction with RANBP3; sequence TVLSKVRLLM…TEIIMTKKLQ (71 aa). N6-acetyllysine is present on lysine 446. Phosphothreonine is present on threonine 448. At serine 450 the chain carries Phosphoserine. Tyrosine 454 carries the post-translational modification Phosphotyrosine. At lysine 693 the chain carries N6-acetyllysine. HEAT repeat units follow at residues 775–813, 885–916, 917–954, and 1002–1039; these read NFVP…KLGG, TMRN…SFYQ, TYFC…NLVE, and FSLN…EERE. A Phosphoserine modification is found at serine 1031.

It belongs to the exportin family. Found in a U snRNA export complex with PHAX/RNUXA, NCBP1/CBP80, NCBP2/CBP20, RAN, XPO1 and m7G-capped RNA. Component of a nuclear export receptor complex composed of KPNB1, RAN, SNUPN and XPO1. Found in a trimeric export complex with SNUPN, RAN and XPO1. Found in a nuclear export complex with RANBP3 and RAN. Found in a 60S ribosomal subunit export complex with NMD3, RAN, XPO1. Interacts with DDX3X, NMD3, NUP42, NUP88, NUP214, RANBP3 and TERT. Interacts with NEMF (via its N-terminus). Interacts with the monomeric form of BIRC5/survivin deacetylated at 'Lys-129'. Interacts with SERTAD2; the interaction translocates SERTAD2 out of the nucleus. Interacts with ATF2. Interacts with SLC35G1 and STIM1. Interacts with DCAF8. Interacts with DTNBP1 and the interaction translocates DTNBP1 out of the nucleus. Interacts with CPEB3. Interacts with HAX1. Interacts with BOK; translocates to the cytoplasm. Interacts with HSP90AB1. Interacts with LRPPRC; interacts with LRPPRC alone and also when LRPPRC is in complex with EIF4E and with EIF4E sensitivity element (4ESE)-containing mRNAs to form an EIF4E-dependent mRNA export complex.

It is found in the cytoplasm. The protein localises to the nucleus. The protein resides in the nucleoplasm. It localises to the cajal body. Its subcellular location is the nucleolus. Functionally, mediates the nuclear export of cellular proteins (cargos) bearing a leucine-rich nuclear export signal (NES) and of RNAs. In the nucleus, in association with RANBP3, binds cooperatively to the NES on its target protein and to the GTPase Ran in its active GTP-bound form. Docking of this complex to the nuclear pore complex (NPC) is mediated through binding to nucleoporins. Upon transit of a nuclear export complex into the cytoplasm, disassembling of the complex and hydrolysis of Ran-GTP to Ran-GDP (induced by RANBP1 and RANGAP1, respectively) cause release of the cargo from the export receptor. The directionality of nuclear export is thought to be conferred by an asymmetric distribution of the GTP- and GDP-bound forms of Ran between the cytoplasm and nucleus. Involved in U3 snoRNA transport from Cajal bodies to nucleoli. Binds to late precursor U3 snoRNA bearing a TMG cap. In Mus musculus (Mouse), this protein is Exportin-1 (Xpo1).